Here is a 452-residue protein sequence, read N- to C-terminus: GTPase Der (452 aa).

EngA-type G domains are found at residues 4-169 (PIVA…PTTE) and 177-352 (IKVA…ASHR). Residues 10-17 (GRPNVGKS), 57-61 (DTGGL), 120-123 (NKCE), 183-190 (GRPNVGKS), 230-234 (DTAGI), and 295-298 (NKWD) each bind GTP. Residues 353 to 438 (RRVSTAVINE…PIRLIWRGKS (86 aa)) enclose the KH-like domain.

It belongs to the TRAFAC class TrmE-Era-EngA-EngB-Septin-like GTPase superfamily. EngA (Der) GTPase family. Associates with the 50S ribosomal subunit.

In terms of biological role, GTPase that plays an essential role in the late steps of ribosome biogenesis. This chain is GTPase Der, found in Gloeothece citriformis (strain PCC 7424) (Cyanothece sp. (strain PCC 7424)).